The sequence spans 372 residues: 4-hydroxy-3-methylbut-2-en-1-yl diphosphate synthase (flavodoxin) (372 aa).

4 residues coordinate [4Fe-4S] cluster: Cys-270, Cys-273, Cys-305, and Glu-312.

It belongs to the IspG family. [4Fe-4S] cluster is required as a cofactor.

The catalysed reaction is (2E)-4-hydroxy-3-methylbut-2-enyl diphosphate + oxidized [flavodoxin] + H2O + 2 H(+) = 2-C-methyl-D-erythritol 2,4-cyclic diphosphate + reduced [flavodoxin]. The protein operates within isoprenoid biosynthesis; isopentenyl diphosphate biosynthesis via DXP pathway; isopentenyl diphosphate from 1-deoxy-D-xylulose 5-phosphate: step 5/6. Its function is as follows. Converts 2C-methyl-D-erythritol 2,4-cyclodiphosphate (ME-2,4cPP) into 1-hydroxy-2-methyl-2-(E)-butenyl 4-diphosphate. In Pseudoalteromonas translucida (strain TAC 125), this protein is 4-hydroxy-3-methylbut-2-en-1-yl diphosphate synthase (flavodoxin).